A 243-amino-acid chain; its full sequence is Pyridoxine 5'-phosphate synthase (243 aa).

3-amino-2-oxopropyl phosphate is bound at residue asparagine 9. 11–12 serves as a coordination point for 1-deoxy-D-xylulose 5-phosphate; the sequence is DH. Residue arginine 20 coordinates 3-amino-2-oxopropyl phosphate. The active-site Proton acceptor is histidine 45. Residues arginine 47 and histidine 52 each coordinate 1-deoxy-D-xylulose 5-phosphate. Residue glutamate 72 is the Proton acceptor of the active site. A 1-deoxy-D-xylulose 5-phosphate-binding site is contributed by threonine 102. Histidine 193 serves as the catalytic Proton donor. 3-amino-2-oxopropyl phosphate is bound by residues glycine 194 and 215 to 216; that span reads GH.

This sequence belongs to the PNP synthase family. In terms of assembly, homooctamer; tetramer of dimers.

The protein localises to the cytoplasm. It carries out the reaction 3-amino-2-oxopropyl phosphate + 1-deoxy-D-xylulose 5-phosphate = pyridoxine 5'-phosphate + phosphate + 2 H2O + H(+). The protein operates within cofactor biosynthesis; pyridoxine 5'-phosphate biosynthesis; pyridoxine 5'-phosphate from D-erythrose 4-phosphate: step 5/5. In terms of biological role, catalyzes the complicated ring closure reaction between the two acyclic compounds 1-deoxy-D-xylulose-5-phosphate (DXP) and 3-amino-2-oxopropyl phosphate (1-amino-acetone-3-phosphate or AAP) to form pyridoxine 5'-phosphate (PNP) and inorganic phosphate. In Yersinia pseudotuberculosis serotype I (strain IP32953), this protein is Pyridoxine 5'-phosphate synthase.